The chain runs to 267 residues: Myxobacterial hemagglutinin (267 aa).

4 repeat units span residues 1–66 (MAAY…GTLS), 67–133 (SANN…SEVT), 134–200 (DGDT…GTLT), and 201–267 (SPDT…ARLG). The interval 1-267 (MAAYLVQNQW…GPIGFRARLG (267 aa)) is 4 X 65 AA tandem repeats.

This sequence belongs to the bacterial lectin family.

In terms of biological role, this lectin might have a role in the differentiation of cells. This is Myxobacterial hemagglutinin (mbhA) from Myxococcus xanthus.